The primary structure comprises 463 residues: Hydrolase pyiE (463 aa).

Ser252 serves as the catalytic Nucleophile. Residues 350 to 373 (KSDGSRANGKKSHSPTDGGGVESD) form a disordered region.

This sequence belongs to the AB hydrolase superfamily. FUS2 hydrolase family. Homodimer.

The protein operates within mycotoxin biosynthesis. Its function is as follows. Hydrolyase; part of the gene cluster that mediates the biosynthesis of the mycotoxin pyrichalasin H, a tyrosine-derived cytochalasan that inhibits the growth of rice seedlings, but also inhibits lymphocyte capping and actin polymerization and alters cell morphology. Pyrichalasin H is indicated as the responsible agent for the genus-specific pathogenicity of M.grisea toward crabgrass. The first step in the pathway is catalyzed by the O-methyltransferase pyiA which methylates free tyrosine to generate the precursor O-methyltyrosine. The hybrid PKS-NRPS pyiS, assisted by the enoyl reductase pyiC, are responsible for fusion of the O-methyltyrosine precursor and the polyketide backbone. The polyketide synthase module (PKS) of pyiS is responsible for the synthesis of the polyketide backbone and the downstream nonribosomal peptide synthetase (NRPS) amidates the carboxyl end of the polyketide with the O-methyltyrosine precursor. As the NRPS A-domain demonstrates substrate tolerance, pyiS can also use phenylalanine, tyrosine and even para-chlorophenylalanine as amino acid precursor, which leads to the production of novel cytochalasans, including halogenated cytochalasans. Because pyiS lacks a designated enoylreductase (ER) domain, the required activity is provided the enoyl reductase pyiC. Reduction by the hydrolyase pyiE leads to 1,5-dihydropyrrolone, which is substrate for dehydration and intra-molecular Diels-Alder cyclization by the Diels-Alderase pyiF to yield the required isoindolone-fused macrocycle. The tailoring cytochrome P450 monooxygenases piyD and piyG catalyze the hydroxylation at C-18 and C-7, respectivily, whereas the short-chain dehydrogenase/reductase pyiH reduces the carbonyl at C-21 in preparation for the transfer of an acetyl group by the acetyltransferase pyiB. These 3 reactions whose order is not clear yet, lead to the production of O-methylpyrichalasin J, a deacetylated pyrichalasin H. Finally, pyiB to converts O-methylpyrichalasin J into the final product pyrichalasin H via acetylation of C-21. The sequence is that of Hydrolase pyiE from Pyricularia grisea (Crabgrass-specific blast fungus).